A 274-amino-acid chain; its full sequence is Bis(5'-nucleosyl)-tetraphosphatase, symmetrical (274 aa).

The protein belongs to the Ap4A hydrolase family.

It carries out the reaction P(1),P(4)-bis(5'-adenosyl) tetraphosphate + H2O = 2 ADP + 2 H(+). Functionally, hydrolyzes diadenosine 5',5'''-P1,P4-tetraphosphate to yield ADP. The chain is Bis(5'-nucleosyl)-tetraphosphatase, symmetrical from Janthinobacterium sp. (strain Marseille) (Minibacterium massiliensis).